We begin with the raw amino-acid sequence, 274 residues long: Hydroxyacylglutathione hydrolase, cytoplasmic isozyme (274 aa).

The Zn(2+) site is built by His-59, His-61, Asp-63, His-64, His-121, and Asp-144. Residues Arg-153 and 188-190 (HEY) contribute to the substrate site. His-188 is a Zn(2+) binding site. Ser-257 carries the phosphoserine modification. 268-271 (RAMK) provides a ligand contact to substrate.

It belongs to the metallo-beta-lactamase superfamily. Glyoxalase II family. Zn(2+) serves as cofactor.

It is found in the cytoplasm. It catalyses the reaction an S-(2-hydroxyacyl)glutathione + H2O = a 2-hydroxy carboxylate + glutathione + H(+). The enzyme catalyses (R)-S-lactoylglutathione + H2O = (R)-lactate + glutathione + H(+). It participates in secondary metabolite metabolism; methylglyoxal degradation; (R)-lactate from methylglyoxal: step 2/2. Inhibited by various thiol compounds such as glutathione and coenzyme A. Thiolesterase that catalyzes the hydrolysis of S-D-lactoylglutathione to form glutathione and D-lactic acid. Involved in the metabolism of methylglyoxal, a toxic compound for yeast proliferation, by converting methylglyoxal to lactate via S-D-lactoylglutathione by sequential enzyme reactions catalyzed by glyoxalase I and glyoxalase II. The chain is Hydroxyacylglutathione hydrolase, cytoplasmic isozyme from Saccharomyces cerevisiae (strain ATCC 204508 / S288c) (Baker's yeast).